The primary structure comprises 331 residues: Pectinesterase (331 aa).

An N-terminal signal peptide occupies residues 1–17; that stretch reads MVKSVLASALFAVSALA. Gln139 is a binding site for substrate. Asp162 (proton donor) is an active-site residue. Asp183 serves as the catalytic Nucleophile. Positions 248 and 250 each coordinate substrate.

The protein belongs to the pectinesterase family.

Its subcellular location is the secreted. The catalysed reaction is [(1-&gt;4)-alpha-D-galacturonosyl methyl ester](n) + n H2O = [(1-&gt;4)-alpha-D-galacturonosyl](n) + n methanol + n H(+). The protein operates within glycan metabolism; pectin degradation; 2-dehydro-3-deoxy-D-gluconate from pectin: step 1/5. Its function is as follows. Involved in maceration and soft-rotting of plant tissue. In Aspergillus aculeatus, this protein is Pectinesterase (pme1).